A 478-amino-acid polypeptide reads, in one-letter code: Aspartyl/glutamyl-tRNA(Asn/Gln) amidotransferase subunit B (478 aa).

It belongs to the GatB/GatE family. GatB subfamily. Heterotrimer of A, B and C subunits.

The enzyme catalyses L-glutamyl-tRNA(Gln) + L-glutamine + ATP + H2O = L-glutaminyl-tRNA(Gln) + L-glutamate + ADP + phosphate + H(+). It catalyses the reaction L-aspartyl-tRNA(Asn) + L-glutamine + ATP + H2O = L-asparaginyl-tRNA(Asn) + L-glutamate + ADP + phosphate + 2 H(+). Allows the formation of correctly charged Asn-tRNA(Asn) or Gln-tRNA(Gln) through the transamidation of misacylated Asp-tRNA(Asn) or Glu-tRNA(Gln) in organisms which lack either or both of asparaginyl-tRNA or glutaminyl-tRNA synthetases. The reaction takes place in the presence of glutamine and ATP through an activated phospho-Asp-tRNA(Asn) or phospho-Glu-tRNA(Gln). The protein is Aspartyl/glutamyl-tRNA(Asn/Gln) amidotransferase subunit B of Pseudothermotoga lettingae (strain ATCC BAA-301 / DSM 14385 / NBRC 107922 / TMO) (Thermotoga lettingae).